Reading from the N-terminus, the 472-residue chain is DEAD-box ATP-dependent RNA helicase 58, chloroplastic (472 aa).

The transit peptide at 1-54 directs the protein to the chloroplast; it reads MASQLLNVPHLAFFPKISYASVFSTLKPSFFHSTSTRRALKSSPSSRIINLQAV. Positions 76–104 match the Q motif motif; it reads RQICQGFVPEHILHRMEEIGFVFPTDIQR. In terms of domain architecture, Helicase ATP-binding spans 107 to 286; sequence LPTLFTGRDC…DCIQQKWTKR (180 aa). 120–127 contacts ATP; that stretch reads AQTGSGKT. Positions 231–234 match the DEAD box motif; it reads DEVD. Residues 314–472 enclose the Helicase C-terminal domain; it reads NKHQVLLALL…LMFSCEEMML (159 aa).

This sequence belongs to the DEAD box helicase family.

It localises to the plastid. It is found in the chloroplast. It catalyses the reaction ATP + H2O = ADP + phosphate + H(+). The polypeptide is DEAD-box ATP-dependent RNA helicase 58, chloroplastic (RH58) (Arabidopsis thaliana (Mouse-ear cress)).